The primary structure comprises 266 residues: Chymotrypsin-like elastase family member 1 (266 aa).

The N-terminal stretch at 1 to 16 (MLRLLVFTSLVLYGHS) is a signal peptide. Residues 17-26 (TQDFPETNAR) constitute a propeptide, activation peptide. In terms of domain architecture, Peptidase S1 spans 27–264 (VVGGTAVSKN…YISWINNAIA (238 aa)). A disulfide bond links Cys56 and Cys72. His71 serves as the catalytic Charge relay system. Residues Asp85, Asn87, Gln90, and Glu95 each coordinate Ca(2+). A glycan (N-linked (GlcNAc...) asparagine) is linked at Asn87. The active-site Charge relay system is the Asp119. 3 disulfide bridges follow: Cys153-Cys220, Cys184-Cys200, and Cys210-Cys240. The active-site Charge relay system is the Ser214. A glycan (N-linked (GlcNAc...) asparagine) is linked at Asn241.

Belongs to the peptidase S1 family. Elastase subfamily. Requires Ca(2+) as cofactor. Pancreas.

Its subcellular location is the secreted. It catalyses the reaction Hydrolysis of proteins, including elastin. Preferential cleavage: Ala-|-Xaa.. Its function is as follows. Serine proteases that hydrolyze many proteins in addition to elastin. The protein is Chymotrypsin-like elastase family member 1 (CELA1) of Bos taurus (Bovine).